Here is a 969-residue protein sequence, read N- to C-terminus: Leucine--tRNA ligase (969 aa).

A 'HIGH' region motif is present at residues 46 to 56 (PYLNGVLHAGH). A 'KMSKS' region motif is present at residues 658-662 (KLSKS). Lysine 661 contributes to the ATP binding site.

This sequence belongs to the class-I aminoacyl-tRNA synthetase family.

It localises to the cytoplasm. The enzyme catalyses tRNA(Leu) + L-leucine + ATP = L-leucyl-tRNA(Leu) + AMP + diphosphate. The polypeptide is Leucine--tRNA ligase (Methanococcus aeolicus (strain ATCC BAA-1280 / DSM 17508 / OCM 812 / Nankai-3)).